The chain runs to 432 residues: Argininosuccinate lyase (432 aa).

This sequence belongs to the lyase 1 family. Argininosuccinate lyase subfamily.

The protein localises to the cytoplasm. The enzyme catalyses 2-(N(omega)-L-arginino)succinate = fumarate + L-arginine. The protein operates within amino-acid biosynthesis; L-arginine biosynthesis; L-arginine from L-ornithine and carbamoyl phosphate: step 3/3. This Xanthomonas axonopodis pv. citri (strain 306) protein is Argininosuccinate lyase.